The primary structure comprises 90 residues: Putative septation protein SpoVG (90 aa).

It belongs to the SpoVG family.

Could be involved in septation. The protein is Putative septation protein SpoVG of Clostridium perfringens (strain SM101 / Type A).